Consider the following 1022-residue polypeptide: Protein translocase subunit SECA1, chloroplastic (1022 aa).

The transit peptide at methionine 1–alanine 72 directs the protein to the chloroplast. Serine 73 carries the post-translational modification N-acetylserine. Methionine 176–threonine 183 is an ATP binding site. The segment at lysine 985–alanine 1022 is disordered. Positions asparagine 993 to asparagine 1002 are enriched in polar residues.

This sequence belongs to the SecA family. As to quaternary structure, part of the Sec protein translocation apparatus. Interacts probably with SCY1. In terms of tissue distribution, expressed in green tissues, including cotyledons, rosette and cauline leaves, and sepals. Also detected at the base and the tip of the trichome.

Its subcellular location is the plastid. It localises to the chloroplast stroma. The protein localises to the chloroplast thylakoid membrane. It carries out the reaction ATP + H2O + chloroplast-proteinSide 1 = ADP + phosphate + chloroplast-proteinSide 2.. In terms of biological role, has a central role in coupling the hydrolysis of ATP to the transfer of proteins across the thylakoid membrane. Involved in photosynthetic acclimation and required for chloroplast biogenesis. This is Protein translocase subunit SECA1, chloroplastic from Arabidopsis thaliana (Mouse-ear cress).